We begin with the raw amino-acid sequence, 337 residues long: 4-hydroxy-3-methylbut-2-enyl diphosphate reductase (337 aa).

Cys38 provides a ligand contact to [4Fe-4S] cluster. His67 and His100 together coordinate (2E)-4-hydroxy-3-methylbut-2-enyl diphosphate. The dimethylallyl diphosphate site is built by His67 and His100. The isopentenyl diphosphate site is built by His67 and His100. [4Fe-4S] cluster is bound at residue Cys122. Residue His150 participates in (2E)-4-hydroxy-3-methylbut-2-enyl diphosphate binding. A dimethylallyl diphosphate-binding site is contributed by His150. His150 is an isopentenyl diphosphate binding site. The active-site Proton donor is the Glu152. Thr190 serves as a coordination point for (2E)-4-hydroxy-3-methylbut-2-enyl diphosphate. Cys220 serves as a coordination point for [4Fe-4S] cluster. Residues Ser248, Ser249, Asn250, and Ser293 each contribute to the (2E)-4-hydroxy-3-methylbut-2-enyl diphosphate site. Dimethylallyl diphosphate-binding residues include Ser248, Ser249, Asn250, and Ser293. The isopentenyl diphosphate site is built by Ser248, Ser249, Asn250, and Ser293.

Belongs to the IspH family. [4Fe-4S] cluster serves as cofactor.

It carries out the reaction isopentenyl diphosphate + 2 oxidized [2Fe-2S]-[ferredoxin] + H2O = (2E)-4-hydroxy-3-methylbut-2-enyl diphosphate + 2 reduced [2Fe-2S]-[ferredoxin] + 2 H(+). The catalysed reaction is dimethylallyl diphosphate + 2 oxidized [2Fe-2S]-[ferredoxin] + H2O = (2E)-4-hydroxy-3-methylbut-2-enyl diphosphate + 2 reduced [2Fe-2S]-[ferredoxin] + 2 H(+). The protein operates within isoprenoid biosynthesis; dimethylallyl diphosphate biosynthesis; dimethylallyl diphosphate from (2E)-4-hydroxy-3-methylbutenyl diphosphate: step 1/1. It functions in the pathway isoprenoid biosynthesis; isopentenyl diphosphate biosynthesis via DXP pathway; isopentenyl diphosphate from 1-deoxy-D-xylulose 5-phosphate: step 6/6. In terms of biological role, catalyzes the conversion of 1-hydroxy-2-methyl-2-(E)-butenyl 4-diphosphate (HMBPP) into a mixture of isopentenyl diphosphate (IPP) and dimethylallyl diphosphate (DMAPP). Acts in the terminal step of the DOXP/MEP pathway for isoprenoid precursor biosynthesis. In Mycolicibacterium vanbaalenii (strain DSM 7251 / JCM 13017 / BCRC 16820 / KCTC 9966 / NRRL B-24157 / PYR-1) (Mycobacterium vanbaalenii), this protein is 4-hydroxy-3-methylbut-2-enyl diphosphate reductase.